We begin with the raw amino-acid sequence, 75 residues long: Small ribosomal subunit protein bS16c (75 aa).

This sequence belongs to the bacterial ribosomal protein bS16 family.

It is found in the plastid. Its subcellular location is the chloroplast. The protein is Small ribosomal subunit protein bS16c of Cyanidioschyzon merolae (strain NIES-3377 / 10D) (Unicellular red alga).